Here is a 492-residue protein sequence, read N- to C-terminus: uncharacterized protein (492 aa).

13 helical membrane passes run 67–87 (VAIM…GGWL), 88–108 (ADRV…IMFG), 110–130 (IALA…LIIV), 157–177 (GFSI…LIVG), 185–205 (YHLG…VFAL), 232–252 (IGVI…VLTI), 255–275 (FIDL…IIMF), 294–314 (LFIG…ILAV), 333–353 (WFQS…AWLW), 367–387 (FSIG…PAMQ), 392–412 (LVSP…ELCL), 434–454 (SMWF…AGLF), and 464–484 (GTIG…SPVI).

It belongs to the major facilitator superfamily. Proton-dependent oligopeptide transporter (POT/PTR) (TC 2.A.17) family.

It localises to the cell membrane. This is an uncharacterized protein from Bacillus subtilis (strain 168).